We begin with the raw amino-acid sequence, 428 residues long: Adenylosuccinate synthetase (428 aa).

Residues 12 to 18 and 40 to 42 each bind GTP; these read GDEGKGK and GHT. The active-site Proton acceptor is the Asp13. Residues Asp13 and Gly40 each contribute to the Mg(2+) site. Residues 13-16, 38-41, Thr128, Arg142, Gln223, Thr238, and Arg302 contribute to the IMP site; these read DEGK and NAGH. His41 functions as the Proton donor in the catalytic mechanism. Position 298–304 (298–304) interacts with substrate; that stretch reads TTTGRPR. GTP-binding positions include Arg304, 330–332, and 412–414; these read SID and SVG.

This sequence belongs to the adenylosuccinate synthetase family. As to quaternary structure, homodimer. Mg(2+) is required as a cofactor.

Its subcellular location is the cytoplasm. It catalyses the reaction IMP + L-aspartate + GTP = N(6)-(1,2-dicarboxyethyl)-AMP + GDP + phosphate + 2 H(+). Its pathway is purine metabolism; AMP biosynthesis via de novo pathway; AMP from IMP: step 1/2. Plays an important role in the de novo pathway of purine nucleotide biosynthesis. Catalyzes the first committed step in the biosynthesis of AMP from IMP. In Geobacillus sp. (strain WCH70), this protein is Adenylosuccinate synthetase.